Here is a 402-residue protein sequence, read N- to C-terminus: Arginine biosynthesis bifunctional protein ArgJ (402 aa).

6 residues coordinate substrate: Thr-149, Lys-175, Thr-186, Glu-266, Asn-397, and Thr-402. The Nucleophile role is filled by Thr-186.

Belongs to the ArgJ family. As to quaternary structure, heterotetramer of two alpha and two beta chains.

Its subcellular location is the cytoplasm. The enzyme catalyses N(2)-acetyl-L-ornithine + L-glutamate = N-acetyl-L-glutamate + L-ornithine. It catalyses the reaction L-glutamate + acetyl-CoA = N-acetyl-L-glutamate + CoA + H(+). It functions in the pathway amino-acid biosynthesis; L-arginine biosynthesis; L-ornithine and N-acetyl-L-glutamate from L-glutamate and N(2)-acetyl-L-ornithine (cyclic): step 1/1. Its pathway is amino-acid biosynthesis; L-arginine biosynthesis; N(2)-acetyl-L-ornithine from L-glutamate: step 1/4. In terms of biological role, catalyzes two activities which are involved in the cyclic version of arginine biosynthesis: the synthesis of N-acetylglutamate from glutamate and acetyl-CoA as the acetyl donor, and of ornithine by transacetylation between N(2)-acetylornithine and glutamate. The sequence is that of Arginine biosynthesis bifunctional protein ArgJ from Prochlorococcus marinus subsp. pastoris (strain CCMP1986 / NIES-2087 / MED4).